We begin with the raw amino-acid sequence, 145 residues long: Bacilliredoxin SAR1441 (145 aa).

The protein belongs to the bacilliredoxin family.

The polypeptide is Bacilliredoxin SAR1441 (Staphylococcus aureus (strain MRSA252)).